The sequence spans 253 residues: Sec-independent protein translocase protein TatC (253 aa).

The next 6 membrane-spanning stretches (helical) occupy residues 18 to 38 (VSVG…KSIF), 69 to 89 (AIVI…APGL), 96 to 116 (VILP…AFSY), 151 to 171 (LILG…LAKV), 187 to 207 (IVVI…SQIF), and 208 to 228 (MALP…MVNP). The interval 231 to 253 (KDNENNNENNNENNTKENTKSES) is disordered. The span at 244 to 253 (NTKENTKSES) shows a compositional bias: basic and acidic residues.

The protein belongs to the TatC family. In terms of assembly, the Tat system comprises two distinct complexes: a TatABC complex, containing multiple copies of TatA, TatB and TatC subunits, and a separate TatA complex, containing only TatA subunits. Substrates initially bind to the TatABC complex, which probably triggers association of the separate TatA complex to form the active translocon.

It localises to the cell inner membrane. Its function is as follows. Part of the twin-arginine translocation (Tat) system that transports large folded proteins containing a characteristic twin-arginine motif in their signal peptide across membranes. Together with TatB, TatC is part of a receptor directly interacting with Tat signal peptides. This Helicobacter pylori (strain ATCC 700392 / 26695) (Campylobacter pylori) protein is Sec-independent protein translocase protein TatC.